Here is a 1075-residue protein sequence, read N- to C-terminus: Ataxin-2-like protein (1075 aa).

An N-acetylmethionine modification is found at M1. Residues 1 to 12 (MLKPQPLQQPSQ) are compositionally biased toward low complexity. The interval 1–115 (MLKPQPLQQP…KGPPQSPVFE (115 aa)) is disordered. The interval 98–121 (SARGQSTGKGPPQSPVFEGVYNNS) is interaction with MPL. S103 and S111 each carry phosphoserine. Phosphotyrosine is present on Y118. The Sm domain occupies 122 to 199 (RMLHFLTAVV…VMLVHFRNVD (78 aa)). K207 bears the N6-acetyllysine mark. S238 is subject to Phosphoserine. A Phosphotyrosine modification is found at Y264. Position 306 is a phosphoserine (S306). At Y309 the chain carries Phosphotyrosine. Positions 316-328 (ENDDGRTEEEKHS) are enriched in basic and acidic residues. Disordered regions lie at residues 316–521 (ENDD…LEPQ), 551–697 (QFKL…SIPV), 733–770 (VSNSVPGQQGKYRGAKGSLPPQRSDQHQPASAPPMMQA), 820–849 (SNPRMLTSGSHPQAIVSSSTPQYPSAEQPT), 865–940 (ATQL…SSFP), and 1022–1045 (PYIGHPQGEQPGQAPGFPGGADDR). Residues 330-342 (VQRQGSGRESPSL) show a composition bias toward polar residues. Phosphoserine occurs at positions 335 and 339. K348 is covalently cross-linked (Glycyl lysine isopeptide (Lys-Gly) (interchain with G-Cter in SUMO2)). The residue at position 349 (Y349) is a Phosphotyrosine. Asymmetric dimethylarginine is present on R361. Positions 363-380 (GVRCSSSRGGRPGLSSLP) are enriched in low complexity. A phosphoserine mark is found at S391 and S409. The span at 421–433 (TLSSPSNRPSGET) shows a compositional bias: polar residues. Phosphoserine is present on S449. 2 stretches are compositionally biased toward low complexity: residues 450-462 (PKSAAPAPISASC) and 471-485 (VPTSSASIPVTSSVS). Phosphoserine occurs at positions 493 and 496. Residues 505-516 (DVKELSTKEPGR) show a composition bias toward basic and acidic residues. A phosphoserine mark is found at S557, S558, S559, and S563. The segment covering 571-584 (ILKEEPKGKEKEVD) has biased composition (basic and acidic residues). Residue S594 is modified to Phosphoserine. At T632 the chain carries Phosphothreonine. Phosphoserine occurs at positions 634, 674, 680, and 684. Composition is skewed to low complexity over residues 678-694 (STSTPTSPGPRTHSTPS) and 761-770 (PASAPPMMQA). The segment covering 874 to 898 (QPATTPTGSQPQSQHAAPSPVQHQA) has biased composition (polar residues). Composition is skewed to low complexity over residues 931–940 (SAQSPQSSFP) and 1025–1037 (GHPQGEQPGQAPG).

It belongs to the ataxin-2 family. In terms of assembly, interacts with MPL/TPOR and EPOR and dissociates after ligand stimulation. Interacts with DDX6, G3BP1, and ATXN2. Interacts with PRMT1. Interacts with CIC and ATXN1. In terms of processing, thrombopoietin triggers the phosphorylation on tyrosine residues in a way that is dependent on MPL C-terminal domain. Post-translationally, asymmetrically dimethylated. Probably methylated by PRMT1. Expressed at high levels in thymus, lymph node, spleen, fetal kidney and adult testis. Constitutively associated with MPL and EPOR in hematopoietic cells.

It localises to the membrane. Its subcellular location is the cytoplasm. The protein resides in the nucleus speckle. It is found in the cytoplasmic granule. Functionally, involved in the regulation of stress granule and P-body formation. This chain is Ataxin-2-like protein (ATXN2L), found in Homo sapiens (Human).